The sequence spans 273 residues: Ribosomal RNA small subunit methyltransferase A (273 aa).

S-adenosyl-L-methionine is bound by residues N18, L20, G45, E66, D91, and N113.

Belongs to the class I-like SAM-binding methyltransferase superfamily. rRNA adenine N(6)-methyltransferase family. RsmA subfamily.

It localises to the cytoplasm. It catalyses the reaction adenosine(1518)/adenosine(1519) in 16S rRNA + 4 S-adenosyl-L-methionine = N(6)-dimethyladenosine(1518)/N(6)-dimethyladenosine(1519) in 16S rRNA + 4 S-adenosyl-L-homocysteine + 4 H(+). In terms of biological role, specifically dimethylates two adjacent adenosines (A1518 and A1519) in the loop of a conserved hairpin near the 3'-end of 16S rRNA in the 30S particle. May play a critical role in biogenesis of 30S subunits. This Klebsiella pneumoniae (strain 342) protein is Ribosomal RNA small subunit methyltransferase A.